A 153-amino-acid chain; its full sequence is UPF0158 protein PA5073 (153 aa).

It belongs to the UPF0158 family.

The chain is UPF0158 protein PA5073 from Pseudomonas aeruginosa (strain ATCC 15692 / DSM 22644 / CIP 104116 / JCM 14847 / LMG 12228 / 1C / PRS 101 / PAO1).